A 70-amino-acid polypeptide reads, in one-letter code: Small ribosomal subunit protein bS18 (70 aa).

It belongs to the bacterial ribosomal protein bS18 family. Part of the 30S ribosomal subunit. Forms a tight heterodimer with protein bS6.

Functionally, binds as a heterodimer with protein bS6 to the central domain of the 16S rRNA, where it helps stabilize the platform of the 30S subunit. This is Small ribosomal subunit protein bS18 from Salinibacter ruber (strain DSM 13855 / M31).